The following is a 318-amino-acid chain: Pyrimidine-specific ribonucleoside hydrolase RihA (318 aa).

Histidine 240 is an active-site residue.

The protein belongs to the IUNH family. RihA subfamily.

In terms of biological role, hydrolyzes cytidine or uridine to ribose and cytosine or uracil, respectively. The chain is Pyrimidine-specific ribonucleoside hydrolase RihA from Shewanella baltica (strain OS185).